The primary structure comprises 1650 residues: Transmembrane domain-containing protein DDB_G0287209 (1650 aa).

Residues 194 to 225 (NNNNNNFNNNNNNNNNNNNNKNNYNNNKSNLI) adopt a coiled-coil conformation. Disordered stretches follow at residues 197–216 (NNNF…NKNN) and 1218–1296 (ENQF…NINN). A compositionally biased stretch (low complexity) spans 1224 to 1284 (NNNENSGSSG…SNSNENNYNG (61 aa)). 9 consecutive transmembrane segments (helical) span residues 1314-1334 (PLLL…LSLF), 1347-1369 (ILFL…LQLF), 1390-1410 (ISIS…DVTS), 1454-1474 (WNIY…LIVP), 1489-1509 (ILFI…VILF), 1515-1535 (WWDL…VTLL), 1539-1559 (PVYF…QFAF), 1570-1590 (VENL…TSII), and 1595-1615 (FNLI…ITII).

Its subcellular location is the membrane. This is Transmembrane domain-containing protein DDB_G0287209 from Dictyostelium discoideum (Social amoeba).